The primary structure comprises 447 residues: UDP-N-acetylmuramate--L-alanine ligase (447 aa).

108 to 114 (GSHGKTS) is a binding site for ATP.

Belongs to the MurCDEF family.

Its subcellular location is the cytoplasm. The enzyme catalyses UDP-N-acetyl-alpha-D-muramate + L-alanine + ATP = UDP-N-acetyl-alpha-D-muramoyl-L-alanine + ADP + phosphate + H(+). It participates in cell wall biogenesis; peptidoglycan biosynthesis. Cell wall formation. In Listeria monocytogenes serotype 4a (strain HCC23), this protein is UDP-N-acetylmuramate--L-alanine ligase.